We begin with the raw amino-acid sequence, 626 residues long: DNA mismatch repair protein MutL (626 aa).

It belongs to the DNA mismatch repair MutL/HexB family.

This protein is involved in the repair of mismatches in DNA. It is required for dam-dependent methyl-directed DNA mismatch repair. May act as a 'molecular matchmaker', a protein that promotes the formation of a stable complex between two or more DNA-binding proteins in an ATP-dependent manner without itself being part of a final effector complex. This Chlorobium luteolum (strain DSM 273 / BCRC 81028 / 2530) (Pelodictyon luteolum) protein is DNA mismatch repair protein MutL.